The chain runs to 359 residues: WAT1-related protein At5g64700 (359 aa).

The next 10 membrane-spanning stretches (helical) occupy residues 10 to 30 (LMVT…KAVF), 37 to 57 (FVFV…LAFF), 66 to 86 (LSFV…TLSL), 100 to 120 (LAAA…LLFG), 135 to 155 (LVGI…KGPL), 186 to 206 (WLKG…WLVL), 218 to 238 (LYFT…IAIA), 256 to 276 (AVIY…SWVI), 282 to 302 (VFLS…SAIL), and 306 to 326 (IISL…YCVL). 2 consecutive EamA domains span residues 18 to 136 (IYTI…AKLV) and 198 to 326 (ILWG…YCVL).

Belongs to the drug/metabolite transporter (DMT) superfamily. Plant drug/metabolite exporter (P-DME) (TC 2.A.7.4) family.

The protein localises to the membrane. The polypeptide is WAT1-related protein At5g64700 (Arabidopsis thaliana (Mouse-ear cress)).